A 194-amino-acid polypeptide reads, in one-letter code: MSRSKKTRRISDIMPARKADKKPALPISNSKKRKPTRYELDVQAREEKKKRKHKGLPTGSRNVITEQKTASAKVKKDPRVGSRKKVPLMVEFVNKPEKGQMIKPVPLEPSNHATKATVSPEVELTQLENNECLNQLLDQLEAGKVLSTQDQQFVDECLDRVHELIIELGIEDDEENNEDLLLRQFETIDINKFK.

Residues 1–81 (MSRSKKTRRI…AKVKKDPRVG (81 aa)) form a disordered region. Composition is skewed to basic and acidic residues over residues 9–23 (RISD…DKKP) and 36–47 (TRYELDVQAREE). Residues 59 to 70 (GSRNVITEQKTA) show a composition bias toward polar residues.

Belongs to the YihI family. Interacts with Der.

Functionally, a GTPase-activating protein (GAP) that modifies Der/EngA GTPase function. May play a role in ribosome biogenesis. This is Der GTPase-activating protein YihI from Haemophilus ducreyi (strain 35000HP / ATCC 700724).